A 1171-amino-acid polypeptide reads, in one-letter code: ATP-dependent helicase/deoxyribonuclease subunit B (1171 aa).

The region spanning 1 to 390 is the UvrD-like helicase ATP-binding domain; it reads MSLRFVIGRA…HPLVECIRSA (390 aa). Residue 8-15 coordinates ATP; sequence GRAGSGKS. Residues 281 to 587 enclose the UvrD-like helicase C-terminal domain; that stretch reads MEQPRFHSPA…QFANIPPSLD (307 aa). [4Fe-4S] cluster contacts are provided by Cys805, Cys1129, Cys1132, and Cys1138.

The protein belongs to the helicase family. AddB/RexB type 1 subfamily. In terms of assembly, heterodimer of AddA and AddB. Requires Mg(2+) as cofactor. [4Fe-4S] cluster serves as cofactor.

The heterodimer acts as both an ATP-dependent DNA helicase and an ATP-dependent, dual-direction single-stranded exonuclease. Recognizes the chi site generating a DNA molecule suitable for the initiation of homologous recombination. The AddB subunit has 5' -&gt; 3' nuclease activity but not helicase activity. This Bacillus cereus (strain ATCC 14579 / DSM 31 / CCUG 7414 / JCM 2152 / NBRC 15305 / NCIMB 9373 / NCTC 2599 / NRRL B-3711) protein is ATP-dependent helicase/deoxyribonuclease subunit B.